We begin with the raw amino-acid sequence, 681 residues long: U3 small nucleolar ribonucleoprotein protein MPP10 (681 aa).

Residues S61, S120, and S140 each carry the phosphoserine modification. Residues 109 to 139 adopt a coiled-coil conformation; it reads ECEDEECEEDASEVEADNQENLETDLDEEQL. Acidic residues predominate over residues 111–144; sequence EDEECEEDASEVEADNQENLETDLDEEQLSDEGG. Disordered regions lie at residues 111–202, 215–256, and 268–365; these read EDEE…SVVD, LEKV…GRQK, and YKDF…EKRQ. The segment covering 145–163 has biased composition (basic and acidic residues); that stretch reads DVPKGRDRAKSSRKSDPRK. 3 positions are modified to phosphoserine: S164, S168, and S172. Residues 215–227 are compositionally biased toward basic and acidic residues; it reads LEKVEKEEEKRPD. 2 stretches are compositionally biased toward acidic residues: residues 228 to 248 and 273 to 322; these read GEEEDEEDIDLFEDIDSDESE and DPVE…EDEN. A phosphoserine mark is found at S244, S247, S277, and S346. Residues 349 to 383 adopt a coiled-coil conformation; that stretch reads AVKQESDEVKSSFEKRQEKMNEKIASLEKELLDKK. K351 is covalently cross-linked (Glycyl lysine isopeptide (Lys-Gly) (interchain with G-Cter in SUMO2)). Over residues 352–365 the composition is skewed to basic and acidic residues; sequence QESDEVKSSFEKRQ. Residues K383 and K395 each participate in a glycyl lysine isopeptide (Lys-Gly) (interchain with G-Cter in SUMO2) cross-link. Positions 471-491 form a coiled coil; that stretch reads AEIYEQEYLKLNQQKTEEEDN. Residue K556 forms a Glycyl lysine isopeptide (Lys-Gly) (interchain with G-Cter in SUMO2) linkage. Residues 560–576 show a composition bias toward basic and acidic residues; that stretch reads KAGDLKTAAEKTATDKK. Residues 560–644 are disordered; that stretch reads KAGDLKTAAE…RKDKPLKSSQ (85 aa). A coiled-coil region spans residues 575-604; sequence KKRERRKKKYQKRLKIKEKEKRKKLLEKNN. Basic residues predominate over residues 577–599; that stretch reads RERRKKKYQKRLKIKEKEKRKKL. K609 is modified (N6-acetyllysine). Basic and acidic residues predominate over residues 630–640; the sequence is LLKDERKDKPL. Glycyl lysine isopeptide (Lys-Gly) (interchain with G-Cter in SUMO2) cross-links involve residues K632 and K649. The interval 657-681 is disordered; it reads QINDAKQPEKIKKKKQDISVHKLKL. Positions 662–681 are enriched in basic and acidic residues; it reads KQPEKIKKKKQDISVHKLKL.

It belongs to the MPP10 family. As to quaternary structure, part of the small subunit (SSU) processome, composed of more than 70 proteins and the RNA chaperone small nucleolar RNA (snoRNA) U3. Component of a heterotrimeric complex containing IMP3, IMP4 and MPHOSPH10. Interacts with IMP3 and IMP4. In terms of processing, phosphorylated in M (mitotic) phase.

It localises to the nucleus. Its subcellular location is the nucleolus. The protein resides in the chromosome. Functionally, component of the 60-80S U3 small nucleolar ribonucleoprotein (U3 snoRNP). Required for the early cleavages during pre-18S ribosomal RNA processing. Part of the small subunit (SSU) processome, first precursor of the small eukaryotic ribosomal subunit. During the assembly of the SSU processome in the nucleolus, many ribosome biogenesis factors, an RNA chaperone and ribosomal proteins associate with the nascent pre-rRNA and work in concert to generate RNA folding, modifications, rearrangements and cleavage as well as targeted degradation of pre-ribosomal RNA by the RNA exosome. This chain is U3 small nucleolar ribonucleoprotein protein MPP10 (Mphosph10), found in Mus musculus (Mouse).